Consider the following 1137-residue polypeptide: AP-4 complex subunit epsilon-1 (1137 aa).

Phosphoserine is present on residues S700 and S857. An interaction with TEPSIN region spans residues S727–S1137.

It belongs to the adaptor complexes large subunit family. In terms of assembly, adaptor protein complex 4 (AP-4) is a heterotetramer composed of two large adaptins (epsilon-type subunit AP4E1 and beta-type subunit AP4B1), a medium adaptin (mu-type subunit AP4M1) and a small adaptin (sigma-type AP4S1). Interacts with TEPSIN. Interacts with GRIA2; probably indirect it mediates the somatodendritic localization of GRIA2 in neurons. As to expression, widely expressed.

The protein localises to the golgi apparatus. The protein resides in the trans-Golgi network membrane. Functionally, component of the adaptor protein complex 4 (AP-4). Adaptor protein complexes are vesicle coat components involved both in vesicle formation and cargo selection. They control the vesicular transport of proteins in different trafficking pathways. AP-4 forms a non clathrin-associated coat on vesicles departing the trans-Golgi network (TGN) and may be involved in the targeting of proteins from the trans-Golgi network (TGN) to the endosomal-lysosomal system. It is also involved in protein sorting to the basolateral membrane in epithelial cells and the proper asymmetric localization of somatodendritic proteins in neurons. AP-4 is involved in the recognition and binding of tyrosine-based sorting signals found in the cytoplasmic part of cargos, but may also recognize other types of sorting signal. This is AP-4 complex subunit epsilon-1 from Homo sapiens (Human).